Consider the following 1015-residue polypeptide: MDVSRRQFFKICAGGMAGTTVAALGFAPKQALAQARNYKLLRAKEIRNTCTYCSVGCGLLMYSLGDGAKNAREAIYHIEGDPDHPVSRGALCPKGAGLLDYVNSENRLRYPEYRAPGSDKWQRISWEEAFSRIAKLMKADRDANFIEKNEQGVTVNRWLSTGMLCASGASNETGMLTQKFARSLGMLAVDNQARVUHGPTVASLAPTFGRGAMTNHWVDIKNANVVMVMGGNAAEAHPVGFRWAMEAKNNNDATLIVVDPRFTRTASVADIYAPIRSGTDITFLSGVLRYLIENNKINAEYVKHYTNASLLVRDDFAFEDGLFSGYDAEKRQYDKSSWNYQLDENGYAKRDETLTHPRCVWNLLKEHVSRYTPDVVENICGTPKADFLKVCEVLASTSAPDRTTTFLYALGWTQHTVGAQNIRTMAMIQLLLGNMGMAGGGVNALRGHSNIQGLTDLGLLSTSLPGYLTLPSEKQVDLQSYLEANTPKATLADQVNYWSNYPKFFVSLMKSFYGDAAQKENNWGYDWLPKWDQTYDVIKYFNMMDEGKVTGYFCQGFNPVASFPDKNKVVSCLSKLKYMVVIDPLVTETSTFWQNHGESNDVDPASIQTEVFRLPSTCFAEEDGSIANSGRWLQWHWKGQDAPGEARNDGEILAGIYHHLRELYQSEGGKGVEPLMKMSWNYKQPHEPQSDEVAKENNGYALEDLYDANGVLIAKKGQLLSSFAHLRDDGTTASSCWIYTGSWTEQGNQMANRDNSDPSGLGNTLGWAWAWPLNRRVLYNRASADINGKPWDPKRMLIQWNGSKWTGNDIPDFGNAAPGTPTGPFIMQPEGMGRLFAINKMAEGPFPEHYEPIETPLGTNPLHPNVVSNPVVRLYEQDALRMGKKEQFPYVGTTYRLTEHFHTWTKHALLNAIAQPEQFVEISETLAAAKGINNGDRVTVSSKRGFIRAVAVVTRRLKPLNVNGQQVETVGIPIHWGFEGVARKGYIANTLTPNVGDANSQTPEYKAFLVNIEKA.

The segment at residues 1 to 33 is a signal peptide (tat-type signal); the sequence is MDVSRRQFFKICAGGMAGTTVAALGFAPKQALA. A 4Fe-4S Mo/W bis-MGD-type domain is found at 43–106; the sequence is AKEIRNTCTY…GLLDYVNSEN (64 aa). Cys50, Cys53, Cys57, and Cys92 together coordinate [4Fe-4S] cluster. Sec196 contacts Mo-bis(molybdopterin guanine dinucleotide). A non-standard amino acid (selenocysteine) is located at residue Sec196.

It belongs to the prokaryotic molybdopterin-containing oxidoreductase family. As to quaternary structure, trimer of heterotrimers, consisting of subunits alpha, beta and gamma. Requires Mo-bis(molybdopterin guanine dinucleotide) as cofactor. It depends on [4Fe-4S] cluster as a cofactor. Post-translationally, exported by the Tat system. The position of the signal peptide cleavage has not been experimentally proven.

It is found in the periplasm. It catalyses the reaction a quinone + formate + H(+) = a quinol + CO2. Formate dehydrogenase allows E.coli to use formate as major electron donor during anaerobic respiration, when nitrate is used as electron acceptor. The alpha subunit FdnG contains the formate oxidation site. Electrons are transferred from formate to menaquinone in the gamma subunit (FdnI), through the 4Fe-4S clusters in the beta subunit (FdnH). Formate dehydrogenase-N is part of a system that generates proton motive force, together with the dissimilatory nitrate reductase (Nar). In Escherichia coli (strain K12), this protein is Formate dehydrogenase, nitrate-inducible, major subunit (fdnG).